The sequence spans 263 residues: Splicing regulator sde2 (263 aa).

Residues 1–84 (MECKTVFLNG…LTLCTRVLGG (84 aa)) constitute a propeptide, UBL. Disordered stretches follow at residues 95-118 (AGGR…LDGN), 137-158 (PAET…LAAD), and 194-263 (STSA…LYGL). Basic and acidic residues predominate over residues 102–117 (KRNEQENQDSCRDLDG). Low complexity-rich tracts occupy residues 194 to 209 (STSA…GATT) and 219 to 230 (NNNSSINSWSRR).

It belongs to the SDE2 family. In terms of assembly, interacts with cay1/cactin. Interacts with prp19. Interacts with cwf12. Interacts with cdc5. Post-translationally, the N-terminal UBL (ubiquitin-like) propeptide is cleaved at Gly-84 by the deubiquitinating enzymes ubp5 and ubp15; the resulting mature sde2 associates with spliceosomes. Polyubiquitinated; ubiquitination is partially dependent on ubr11.

Its subcellular location is the cytoplasm. It is found in the nucleus. Plays a role in pre-mRNA splicing by facilitating excision of introns featuring relatively long (&gt;21 nucleotides) spacing between the branchpoint and 3'-splice site (ss). Recruits cactin to the spliceosome which may enable folding of RNA between the branchpoint and 3'-ss, to guide the splice site towards the spliceosome's catalytic center. Required for proper chromatin organization by assisting splicing of components involved in genomic stability and telomere organization. In Schizosaccharomyces pombe (strain 972 / ATCC 24843) (Fission yeast), this protein is Splicing regulator sde2.